An 88-amino-acid chain; its full sequence is Small ribosomal subunit protein bS20 (88 aa).

The protein belongs to the bacterial ribosomal protein bS20 family.

In terms of biological role, binds directly to 16S ribosomal RNA. The sequence is that of Small ribosomal subunit protein bS20 from Mycoplasmopsis synoviae (strain 53) (Mycoplasma synoviae).